The chain runs to 381 residues: Chorismate synthase (381 aa).

2 residues coordinate NADP(+): Arg-39 and Arg-45. FMN contacts are provided by residues 127–129 (RAS), 248–249 (QS), Gly-293, 308–312 (KPIPT), and Arg-334.

Belongs to the chorismate synthase family. As to quaternary structure, homotetramer. Requires FMNH2 as cofactor.

The enzyme catalyses 5-O-(1-carboxyvinyl)-3-phosphoshikimate = chorismate + phosphate. Its pathway is metabolic intermediate biosynthesis; chorismate biosynthesis; chorismate from D-erythrose 4-phosphate and phosphoenolpyruvate: step 7/7. In terms of biological role, catalyzes the anti-1,4-elimination of the C-3 phosphate and the C-6 proR hydrogen from 5-enolpyruvylshikimate-3-phosphate (EPSP) to yield chorismate, which is the branch point compound that serves as the starting substrate for the three terminal pathways of aromatic amino acid biosynthesis. This reaction introduces a second double bond into the aromatic ring system. This chain is Chorismate synthase, found in Caldicellulosiruptor saccharolyticus (strain ATCC 43494 / DSM 8903 / Tp8T 6331).